We begin with the raw amino-acid sequence, 585 residues long: Glycerol-3-phosphate dehydrogenase 2 (585 aa).

Asp37–Glu65 serves as a coordination point for FAD.

It belongs to the FAD-dependent glycerol-3-phosphate dehydrogenase family. Requires FAD as cofactor.

Its subcellular location is the cytoplasm. The enzyme catalyses a quinone + sn-glycerol 3-phosphate = dihydroxyacetone phosphate + a quinol. This Mycobacterium bovis (strain ATCC BAA-935 / AF2122/97) protein is Glycerol-3-phosphate dehydrogenase 2 (glpD2).